Consider the following 1030-residue polypeptide: FACT complex subunit spt-16 (1030 aa).

Residues 424–445 are a coiled coil; it reads RLKSNVIKFKEEQENREAEKDN. 2 stretches are compositionally biased toward basic and acidic residues: residues 435–449 and 464–477; these read EQENREAEKDNDQKK and TRNKTTNEELRKER. Disordered stretches follow at residues 435-477 and 491-514; these read EQEN…RKER and ARLSKQGGGTDEKKSKKSNVSYKT. Residues 623 to 645 are a coiled coil; it reads RLIKEMQKRFKTEEAEEREKEGA. Residues 927-1030 form a disordered region; the sequence is VESDNEEAMD…KSGPSHKRRK (104 aa). Acidic residues-rich tracts occupy residues 929 to 951 and 958 to 983; these read SDNEEAMDDSDDSDAYDPEEEDA and ESDEDESEGEETESDDDDEGSLDSDE. Positions 987–1007 form a coiled coil; it reads KDWSDLEEEAANADKRREVEE. Positions 998 to 1014 are enriched in basic and acidic residues; it reads NADKRREVEEPSRDRDR. Residues 1015 to 1030 are compositionally biased toward basic residues; it reads KRPHSSKSGPSHKRRK.

Belongs to the peptidase M24 family. SPT16 subfamily. In terms of assembly, component of the FACT complex, a stable heterodimer of spt-16 and hmg-3 or hmg-4. In terms of tissue distribution, expressed in the germline and somatic cells.

The protein resides in the nucleus. The protein localises to the chromosome. Component of the FACT complex, a general chromatin factor that acts to reorganize nucleosomes. The FACT complex is involved in multiple processes that require DNA as a template such as mRNA elongation, DNA replication and DNA repair. During transcription elongation the FACT complex acts as a histone chaperone that both destabilizes and restores nucleosomal structure. It facilitates the passage of RNA polymerase II and transcription by promoting the dissociation of one histone H2A-H2B dimer from the nucleosome, then subsequently promotes the reestablishment of the nucleosome following the passage of RNA polymerase II. In embryos, promotes cell cycle progression and chromosomal segregation. Plays a role in the development of the anterior pharynx during embryonic development. This Caenorhabditis elegans protein is FACT complex subunit spt-16.